The following is a 497-amino-acid chain: Probable cytosol aminopeptidase (497 aa).

Lys-263 and Asp-268 together coordinate Mn(2+). The active site involves Lys-275. The Mn(2+) site is built by Asp-286, Asp-345, and Glu-347. Residue Arg-349 is part of the active site.

It belongs to the peptidase M17 family. Mn(2+) serves as cofactor.

It is found in the cytoplasm. The catalysed reaction is Release of an N-terminal amino acid, Xaa-|-Yaa-, in which Xaa is preferably Leu, but may be other amino acids including Pro although not Arg or Lys, and Yaa may be Pro. Amino acid amides and methyl esters are also readily hydrolyzed, but rates on arylamides are exceedingly low.. It carries out the reaction Release of an N-terminal amino acid, preferentially leucine, but not glutamic or aspartic acids.. Functionally, presumably involved in the processing and regular turnover of intracellular proteins. Catalyzes the removal of unsubstituted N-terminal amino acids from various peptides. This chain is Probable cytosol aminopeptidase, found in Methylorubrum extorquens (strain CM4 / NCIMB 13688) (Methylobacterium extorquens).